A 228-amino-acid chain; its full sequence is Biosynthetic peptidoglycan transglycosylase (228 aa).

The helical transmembrane segment at 8-28 (ILAALVAAFLLYNLWVLGHII) threads the bilayer.

Belongs to the glycosyltransferase 51 family.

The protein localises to the cell inner membrane. It catalyses the reaction [GlcNAc-(1-&gt;4)-Mur2Ac(oyl-L-Ala-gamma-D-Glu-L-Lys-D-Ala-D-Ala)](n)-di-trans,octa-cis-undecaprenyl diphosphate + beta-D-GlcNAc-(1-&gt;4)-Mur2Ac(oyl-L-Ala-gamma-D-Glu-L-Lys-D-Ala-D-Ala)-di-trans,octa-cis-undecaprenyl diphosphate = [GlcNAc-(1-&gt;4)-Mur2Ac(oyl-L-Ala-gamma-D-Glu-L-Lys-D-Ala-D-Ala)](n+1)-di-trans,octa-cis-undecaprenyl diphosphate + di-trans,octa-cis-undecaprenyl diphosphate + H(+). It participates in cell wall biogenesis; peptidoglycan biosynthesis. Its function is as follows. Peptidoglycan polymerase that catalyzes glycan chain elongation from lipid-linked precursors. This is Biosynthetic peptidoglycan transglycosylase from Chromobacterium violaceum (strain ATCC 12472 / DSM 30191 / JCM 1249 / CCUG 213 / NBRC 12614 / NCIMB 9131 / NCTC 9757 / MK).